A 175-amino-acid polypeptide reads, in one-letter code: MSKQDEVIVVGKFGASYGIRGWLKVVSFTDQPESIFDYKPLLIKVKDEWVEFSVESWKRHKGLVCKLEGLEVREEAQAYTNLEIAVKADALPELSEDEFYWRELFGMEVVTSQGYGLGIVDDIFETGSNDVLVVKANLKDAFGKKERLIPFIDEQVIKVIDREAQRIEVDWDPGF.

The region spanning 95 to 175 is the PRC barrel domain; sequence SEDEFYWREL…RIEVDWDPGF (81 aa).

The protein belongs to the RimM family. As to quaternary structure, binds ribosomal protein uS19.

It localises to the cytoplasm. Its function is as follows. An accessory protein needed during the final step in the assembly of 30S ribosomal subunit, possibly for assembly of the head region. Essential for efficient processing of 16S rRNA. May be needed both before and after RbfA during the maturation of 16S rRNA. It has affinity for free ribosomal 30S subunits but not for 70S ribosomes. The polypeptide is Ribosome maturation factor RimM (Aliivibrio salmonicida (strain LFI1238) (Vibrio salmonicida (strain LFI1238))).